The sequence spans 309 residues: Anamorsin (309 aa).

Positions 6 to 172 (ISPGQLVAVF…KPNFEVGSSS (167 aa)) are N-terminal SAM-like domain. Positions 173–222 (QLKLLHKKSSSVKPVVDPATAKLWTLSANDMEDDSMDLIDSDELLDPEDL) are linker. Residues serine 182, serine 183, and serine 213 each carry the phosphoserine modification. Residues cysteine 235, cysteine 244, cysteine 247, and cysteine 249 each contribute to the [2Fe-2S] cluster site. The segment at 235 to 249 (CGEGKKRKACKNCTC) is fe-S binding site A. A Phosphoserine modification is found at serine 269. The [4Fe-4S] cluster site is built by cysteine 271, cysteine 274, cysteine 282, and cysteine 285. 2 short sequence motifs (cx2C motif) span residues 271–274 (CGNC) and 282–285 (CANC). The tract at residues 271–285 (CGNCYLGDAFRCANC) is fe-S binding site B. A phosphoserine mark is found at serine 302 and serine 304.

The protein belongs to the anamorsin family. In terms of assembly, monomer. Interacts with NDOR1. Interacts with CHCHD4. [2Fe-2S] cluster is required as a cofactor. It depends on [4Fe-4S] cluster as a cofactor.

It is found in the cytoplasm. The protein localises to the nucleus. Its subcellular location is the mitochondrion intermembrane space. Its function is as follows. Component of the cytosolic iron-sulfur (Fe-S) protein assembly (CIA) machinery required for the maturation of extramitochondrial Fe-S proteins. Part of an electron transfer chain functioning in an early step of cytosolic Fe-S biogenesis, facilitating the de novo assembly of a [4Fe-4S] cluster on the scaffold complex NUBP1-NUBP2. Electrons are transferred to CIAPIN1 from NADPH via the FAD- and FMN-containing protein NDOR1. NDOR1-CIAPIN1 are also required for the assembly of the diferric tyrosyl radical cofactor of ribonucleotide reductase (RNR), probably by providing electrons for reduction during radical cofactor maturation in the catalytic small subunit. Has anti-apoptotic effects in the cell. Involved in negative control of cell death upon cytokine withdrawal. Promotes development of hematopoietic cells. In Rattus norvegicus (Rat), this protein is Anamorsin.